The primary structure comprises 715 residues: MYLSIIILPLLGSIVAGFFGRKVGVSGAQLITCLSVIITTGLAILAFFEVGFNNIPVTINLFRWIDSEWYNILWGFQFDSLTVAMLIPVLIISSLVHIYSISYMSHDPHNQRFFSYLSLFTFMMIILVTANNYLLMFVGWEGVGVCSYLLVSFWFTRIAANQSSMSAFLTNRVGDCFLTIGMFVVLWTLGNLDYATVFSLAPYINSDIATIIGICLLIGAMAKSSQVGLHVWLPMAMEGPTPVSALIHAATMVTAGVYLLMRSSPLIEYSSTVLLLCLWLGAITTVFSSLIGLFQQDIKKVIAYSTMSQLGMMVIAIGLSSYNVALFHLINHAFYKALLFLGAGSVIHAVADNQDFRKFGGLKNYLPLTYSVMLIASLSLVAFPYMTGFYSKDFILESAYGQFSFSGVAVYIIATIGAIFTTLYSVKVLYLTFLANPNGYIHFYRHFILYERLYVYVSYTGKEEFYLPKHMSKEINNLPRSVSGEGGFFLSLPLVILALFSIFFGFITKDIFIGLGSNFFIDNSLFIHPIHEIMIDTEFAVPTLFKLLPFIFTISFSLIALVLSEKYPNLVVHFKLSRLGYNLFGFFNQRFLVELFYNKYITNLVLDLGGQITKILDKGSIELLGPFGLEKVLIKWSKDIASLSTSIVTNYALFILVGFILYVFTFISLLEGGLDLNLSLFILLLSLTSSTSSSDSKEGKMIKKAVVSTKNKNIR.

Transmembrane regions (helical) follow at residues Met1–Arg21, Leu30–Val50, Leu81–Ile101, Leu119–Gly139, Trp140–Ala160, Phe177–Val197, Leu200–Ala220, Thr241–Met261, Leu274–Phe294, Leu310–Ile330, Asn331–Ala351, Leu366–Met386, Phe403–Leu423, Gly487–Ile507, Thr543–Leu563, Ile647–Ile667, and Ser668–Thr688.

The protein belongs to the complex I subunit 5 family.

The protein localises to the mitochondrion inner membrane. It carries out the reaction a ubiquinone + NADH + 5 H(+)(in) = a ubiquinol + NAD(+) + 4 H(+)(out). Its function is as follows. Core subunit of the mitochondrial membrane respiratory chain NADH dehydrogenase (Complex I) that is believed to belong to the minimal assembly required for catalysis. Complex I functions in the transfer of electrons from NADH to the respiratory chain. The immediate electron acceptor for the enzyme is believed to be ubiquinone. This Neurospora crassa (strain ATCC 24698 / 74-OR23-1A / CBS 708.71 / DSM 1257 / FGSC 987) protein is NADH-ubiquinone oxidoreductase chain 5 (ndh-5).